The following is a 1488-amino-acid chain: Putative E3 ubiquitin-protein ligase LIN (1488 aa).

Disordered stretches follow at residues 297-330 (GFSM…EQSS), 351-414 (YDAS…PLRR), and 432-500 (IVSD…SSSS). A compositionally biased stretch (basic and acidic residues) spans 366 to 380 (EPKKNIKDEDVEPKV). A compositionally biased stretch (polar residues) spans 382–411 (RSNQKNQMNSPNISPMESPRRASNYSSTNP). Residues 432–444 (IVSDHSLSSSPDT) are compositionally biased toward low complexity. A compositionally biased stretch (polar residues) spans 468 to 486 (SQTPSMNQDNENSLVLNDS). A U-box domain is found at 512–587 (KPPKDFVCPI…VSWKEQNPEL (76 aa)). WD repeat units lie at residues 1207 to 1244 (SSNG…PRVI), 1249 to 1290 (EHKK…DVYD), 1412 to 1451 (SLST…RVAS), and 1456 to 1488 (GGNT…WALD).

As to expression, expressed in roots and nodules.

It catalyses the reaction S-ubiquitinyl-[E2 ubiquitin-conjugating enzyme]-L-cysteine + [acceptor protein]-L-lysine = [E2 ubiquitin-conjugating enzyme]-L-cysteine + N(6)-ubiquitinyl-[acceptor protein]-L-lysine.. Its pathway is protein modification; protein ubiquitination. Its function is as follows. Putative E3 ubiquitin ligase involved in the rhizobial infection process. Plays an important role in the early steps of bacterial symbiont thread formation in roots, and in growth, differentiation and maintenance of nodules. The polypeptide is Putative E3 ubiquitin-protein ligase LIN (Medicago truncatula (Barrel medic)).